A 99-amino-acid chain; its full sequence is DNA/RNA-binding protein Alba 1 (99 aa).

The residue at position 17 (lysine 17) is an N6-acetyllysine.

The protein belongs to the histone-like Alba family. Post-translationally, acetylated. Acetylation at Lys-17 decreases DNA-binding affinity.

The protein localises to the cytoplasm. It localises to the chromosome. In terms of biological role, binds double-stranded DNA tightly but without sequence specificity. Involved in DNA compaction. The sequence is that of DNA/RNA-binding protein Alba 1 from Sulfurisphaera tokodaii (strain DSM 16993 / JCM 10545 / NBRC 100140 / 7) (Sulfolobus tokodaii).